A 413-amino-acid chain; its full sequence is Protein trichome birefringence-like 31 (413 aa).

Residues 12–34 (IQSIFQVVLVSLLVLGSVRWILD) traverse the membrane as a helical; Signal-anchor for type II membrane protein segment. The GDS motif signature appears at 141–143 (GDS). The DCXHWCLPGXXDXWN motif motif lies at 384–398 (DCIHWCLPGVPDTWN).

This sequence belongs to the PC-esterase family. TBL subfamily.

Its subcellular location is the membrane. Functionally, may act as a bridging protein that binds pectin and other cell wall polysaccharides. Probably involved in maintaining esterification of pectins. May be involved in the specific O-acetylation of cell wall polymers. This is Protein trichome birefringence-like 31 (TBL31) from Arabidopsis thaliana (Mouse-ear cress).